We begin with the raw amino-acid sequence, 217 residues long: Peptide methionine sulfoxide reductase MsrA 1 (217 aa).

Cysteine 57 is a catalytic residue.

It belongs to the MsrA Met sulfoxide reductase family.

The enzyme catalyses L-methionyl-[protein] + [thioredoxin]-disulfide + H2O = L-methionyl-(S)-S-oxide-[protein] + [thioredoxin]-dithiol. It catalyses the reaction [thioredoxin]-disulfide + L-methionine + H2O = L-methionine (S)-S-oxide + [thioredoxin]-dithiol. In terms of biological role, has an important function as a repair enzyme for proteins that have been inactivated by oxidation. Catalyzes the reversible oxidation-reduction of methionine sulfoxide in proteins to methionine. The polypeptide is Peptide methionine sulfoxide reductase MsrA 1 (msrA1) (Rhizobium meliloti (strain 1021) (Ensifer meliloti)).